We begin with the raw amino-acid sequence, 314 residues long: Olfactory receptor 8D4 (314 aa).

The Extracellular segment spans residues 1 to 25 (MGVKNHSTVTEFLLSGLTEQAELQL). Residue N5 is glycosylated (N-linked (GlcNAc...) asparagine). A helical transmembrane segment spans residues 26–46 (PLFCLFLGIYTVTVVGNLSMI). At 47 to 54 (SIIRLNRQ) the chain is on the cytoplasmic side. The chain crosses the membrane as a helical span at residues 55-75 (LHTPMYYFLSSLSFLDFCYSS). The Extracellular segment spans residues 76-99 (VITPKMLSGFLCRDRSISYSGCMI). C97 and C189 are joined by a disulfide. Residues 100–120 (QLFFFCVCVISECYMLAAMAC) form a helical membrane-spanning segment. At 121 to 139 (DRYVAICSPLLYRVIMSPR) the chain is on the cytoplasmic side. The helical transmembrane segment at 140-160 (VCSLLVAAVFSVGFTDAVIHG) threads the bilayer. The Extracellular portion of the chain corresponds to 161–197 (GCILRLSFCGSNIIKHYFCDIVPLIKLSCSSTYIDEL). The chain crosses the membrane as a helical span at residues 198–217 (LIFVIGGFNMVATSLTIIIS). Residues 218–237 (YAFILTSILRIHSKKGRCKA) lie on the Cytoplasmic side of the membrane. A helical transmembrane segment spans residues 238 to 258 (FSTCSSHLTAVLMFYGSLMSM). Over 259–271 (YLKPASSSSLTQE) the chain is Extracellular. The chain crosses the membrane as a helical span at residues 272–292 (KVSSVFYTTVILMLNPLIYSL). Over 293 to 314 (RNNEVRNALMKLLRRKISLSPG) the chain is Cytoplasmic.

The protein belongs to the G-protein coupled receptor 1 family.

The protein resides in the cell membrane. In terms of biological role, odorant receptor. The polypeptide is Olfactory receptor 8D4 (OR8D4) (Homo sapiens (Human)).